The following is a 342-amino-acid chain: N-acetyl-gamma-glutamyl-phosphate reductase (342 aa).

C147 is an active-site residue.

Belongs to the NAGSA dehydrogenase family. Type 1 subfamily.

The protein localises to the cytoplasm. It carries out the reaction N-acetyl-L-glutamate 5-semialdehyde + phosphate + NADP(+) = N-acetyl-L-glutamyl 5-phosphate + NADPH + H(+). It participates in amino-acid biosynthesis; L-arginine biosynthesis; N(2)-acetyl-L-ornithine from L-glutamate: step 3/4. In terms of biological role, catalyzes the NADPH-dependent reduction of N-acetyl-5-glutamyl phosphate to yield N-acetyl-L-glutamate 5-semialdehyde. The polypeptide is N-acetyl-gamma-glutamyl-phosphate reductase (Campylobacter jejuni subsp. jejuni serotype O:2 (strain ATCC 700819 / NCTC 11168)).